The following is a 319-amino-acid chain: Coproporphyrin III ferrochelatase 2 (319 aa).

Residues Y13, R30, R46–Y47, S54, and Y125 each bind Fe-coproporphyrin III. 2 residues coordinate Fe(2+): H181 and E262.

It belongs to the ferrochelatase family.

Its subcellular location is the cytoplasm. It catalyses the reaction Fe-coproporphyrin III + 2 H(+) = coproporphyrin III + Fe(2+). It functions in the pathway porphyrin-containing compound metabolism; protoheme biosynthesis. In terms of biological role, involved in coproporphyrin-dependent heme b biosynthesis. Catalyzes the insertion of ferrous iron into coproporphyrin III to form Fe-coproporphyrin III. This Bacillus thuringiensis subsp. konkukian (strain 97-27) protein is Coproporphyrin III ferrochelatase 2.